We begin with the raw amino-acid sequence, 323 residues long: MAAELSMGQELPTSPLAMEYVNDFDLLKFDVKKEPLGRAERPGRPCTRLQPAGSVSSTPLSTPCSSVPSSPSFSPTEPKTHLEDLYWMASNYQQMNPEALNLTPEDAVEALIGSHPVPQPLQSFDGFRSAHHHHHHHHPHPHHGYPGAGVTHDDLGQHAHPHHHHHHQASPPPSSAASPAQQLPTSHPGPGPHATAAATAAGGNGSVEDRFSDDQLVSMSVRELNRHLRGFTKDEVIRLKQKRRTLKNRGYAQSCRYKRVQQKHHLENEKTQLIQQVEQLKQEVSRLARERDAYKVKCEKLANSGFREAGSTSDSPSSPEFFL.

Residue K32 forms a Glycyl lysine isopeptide (Lys-Gly) (interchain with G-Cter in SUMO) linkage. Residues 34 to 43 (EPLGRAERPG) are compositionally biased toward basic and acidic residues. Disordered regions lie at residues 34–78 (EPLG…PTEP) and 116–210 (PVPQ…VEDR). Residues 54 to 77 (SVSSTPLSTPCSSVPSSPSFSPTE) show a composition bias toward low complexity. 2 stretches are compositionally biased toward basic residues: residues 129–143 (SAHH…HPHH) and 159–168 (AHPHHHHHHQ). Residues 192-201 (PHATAAATAA) show a composition bias toward low complexity. The interval 238 to 263 (RLKQKRRTLKNRGYAQSCRYKRVQQK) is basic motif. The bZIP domain maps to 238–301 (RLKQKRRTLK…DAYKVKCEKL (64 aa)). The interval 266–287 (LENEKTQLIQQVEQLKQEVSRL) is leucine-zipper. A Glycyl lysine isopeptide (Lys-Gly) (interchain with G-Cter in SUMO) cross-link involves residue K297.

It belongs to the bZIP family. Maf subfamily. As to quaternary structure, homodimer or heterodimer with other bHLH-Zip transcription factors. Forms homodimers and heterodimers with FOS, FOSB and FOSL2, but not with JUN proteins (JUN, JUNB and JUND). Interacts with the intracellular cytoplasmic domain of LRP1 (LRPICD); the interaction results in a moderate reduction of MAFB transcriptional potential. Binds DNA as a homodimer or a heterodimer. Interacts with PAX6; the interaction is direct. Interacts with ETS1 and LRP1. Post-translationally, sumoylated. Sumoylation on Lys-32 and Lys-297 stimulates its transcriptional repression activity and promotes macrophage differentiation from myeloid progenitors. In terms of tissue distribution, expressed in pancreatic alpha-cells (glucagon-positive cells), in podocytes of the kidney and macrophages (at protein level). Most abundant in kidney, gut, lung and brain.

It localises to the nucleus. Acts as a transcriptional activator or repressor. Plays a pivotal role in regulating lineage-specific hematopoiesis by repressing ETS1-mediated transcription of erythroid-specific genes in myeloid cells. Required for monocytic, macrophage, osteoclast, podocyte and islet beta cell differentiation. Involved in renal tubule survival and F4/80 maturation. Activates the insulin and glucagon promoters. Together with PAX6, transactivates weakly the glucagon gene promoter through the G1 element. SUMO modification controls its transcriptional activity and ability to specify macrophage fate. Binds element G1 on the glucagon promoter. Involved either as an oncogene or as a tumor suppressor, depending on the cell context. Required for the transcriptional activation of HOXB3 in the rhombomere r5 in the hindbrain. This chain is Transcription factor MafB (Mafb), found in Mus musculus (Mouse).